The chain runs to 232 residues: Small ribosomal subunit protein uS3 (232 aa).

In terms of domain architecture, KH type-2 spans 39-107; it reads IRKFLKTKLY…DIAINIKEER (69 aa). The span at 213–222 shows a compositional bias: basic and acidic residues; the sequence is QADKNEDTSP. The interval 213-232 is disordered; that stretch reads QADKNEDTSPKKPRRARRGK. Residues 223–232 are compositionally biased toward basic residues; it reads KKPRRARRGK.

It belongs to the universal ribosomal protein uS3 family. In terms of assembly, part of the 30S ribosomal subunit. Forms a tight complex with proteins S10 and S14.

In terms of biological role, binds the lower part of the 30S subunit head. Binds mRNA in the 70S ribosome, positioning it for translation. The polypeptide is Small ribosomal subunit protein uS3 (Campylobacter fetus subsp. fetus (strain 82-40)).